Consider the following 760-residue polypeptide: NAD(P)H-quinone oxidoreductase subunit 5, chloroplastic (760 aa).

16 helical membrane-spanning segments follow: residues 9-29, 39-59, 89-109, 125-145, 147-167, 185-205, 221-241, 260-280, 282-302, 329-349, 356-376, 398-418, 429-449, 556-576, 620-640, and 734-754; these read WIISFVTLPVPMLIGMGLLLF, IWAFPSVLLLSIVMVFSTDLF, IDPLTSILLILITTVGILVLV, FVYMSFFNTSMLGLVTSSNLI, IYIFWELVGMCSYLLIGFWFT, GDFGLLLGILGLYWITGSFEF, NEVHFLFVTLCAFLLFSGAIA, TPISALIHAATMVAAGIFLVA, LLPLFVVIPYIMKLIALIGII, LGYTMLALGMGSYRAALFHLI, ALLFLGSGSIIHSMEGIVGYS, IAFLLGTLSLCGIPPLACFWS, YSPIFAIIAFSTAGLTAFYMF, ILFPMLVLVLFTLFIGAIGIP, FSVSIASFGIFIASSLYKPIY, and FYLLLYLFYVLIFLLISSSIF.

Belongs to the complex I subunit 5 family. NDH is composed of at least 16 different subunits, 5 of which are encoded in the nucleus.

Its subcellular location is the plastid. The protein resides in the chloroplast thylakoid membrane. The enzyme catalyses a plastoquinone + NADH + (n+1) H(+)(in) = a plastoquinol + NAD(+) + n H(+)(out). The catalysed reaction is a plastoquinone + NADPH + (n+1) H(+)(in) = a plastoquinol + NADP(+) + n H(+)(out). NDH shuttles electrons from NAD(P)H:plastoquinone, via FMN and iron-sulfur (Fe-S) centers, to quinones in the photosynthetic chain and possibly in a chloroplast respiratory chain. The immediate electron acceptor for the enzyme in this species is believed to be plastoquinone. Couples the redox reaction to proton translocation, and thus conserves the redox energy in a proton gradient. In Populus alba (White poplar), this protein is NAD(P)H-quinone oxidoreductase subunit 5, chloroplastic (ndhF).